Reading from the N-terminus, the 123-residue chain is Small ribosomal subunit protein uS12 (123 aa).

The residue at position 89 (aspartate 89) is a 3-methylthioaspartic acid.

The protein belongs to the universal ribosomal protein uS12 family. As to quaternary structure, part of the 30S ribosomal subunit. Contacts proteins S8 and S17. May interact with IF1 in the 30S initiation complex.

In terms of biological role, with S4 and S5 plays an important role in translational accuracy. Its function is as follows. Interacts with and stabilizes bases of the 16S rRNA that are involved in tRNA selection in the A site and with the mRNA backbone. Located at the interface of the 30S and 50S subunits, it traverses the body of the 30S subunit contacting proteins on the other side and probably holding the rRNA structure together. The combined cluster of proteins S8, S12 and S17 appears to hold together the shoulder and platform of the 30S subunit. This chain is Small ribosomal subunit protein uS12, found in Beijerinckia indica subsp. indica (strain ATCC 9039 / DSM 1715 / NCIMB 8712).